The following is a 227-amino-acid chain: Lipoprotein-releasing system ATP-binding protein LolD (227 aa).

The ABC transporter domain occupies 6-227; that stretch reads LKCENINKFY…MQDGLLKEGA (222 aa). 42 to 49 contacts ATP; the sequence is GSSGSGKS.

The protein belongs to the ABC transporter superfamily. Lipoprotein translocase (TC 3.A.1.125) family. In terms of assembly, the complex is composed of two ATP-binding proteins (LolD) and two transmembrane proteins (LolC and LolE).

It localises to the cell inner membrane. Part of the ABC transporter complex LolCDE involved in the translocation of mature outer membrane-directed lipoproteins, from the inner membrane to the periplasmic chaperone, LolA. Responsible for the formation of the LolA-lipoprotein complex in an ATP-dependent manner. In Haemophilus influenzae (strain 86-028NP), this protein is Lipoprotein-releasing system ATP-binding protein LolD.